A 336-amino-acid chain; its full sequence is Holliday junction branch migration complex subunit RuvB (336 aa).

Residues 1 to 182 are large ATPase domain (RuvB-L); the sequence is MAKRMITTEL…FGVVHRLEFY (182 aa). ATP contacts are provided by residues L21, R22, G63, K66, T67, T68, 129–131, R172, Y182, and R219; that span reads EDY. Mg(2+) is bound at residue T67. The segment at 183–253 is small ATPAse domain (RuvB-S); sequence TTEELKEIIT…VARFALDILE (71 aa). Residues 256–336 are head domain (RuvB-H); that stretch reads KLGLDHIDRQ…GLPYENKELS (81 aa). The DNA site is built by R311 and R316.

It belongs to the RuvB family. As to quaternary structure, homohexamer. Forms an RuvA(8)-RuvB(12)-Holliday junction (HJ) complex. HJ DNA is sandwiched between 2 RuvA tetramers; dsDNA enters through RuvA and exits via RuvB. An RuvB hexamer assembles on each DNA strand where it exits the tetramer. Each RuvB hexamer is contacted by two RuvA subunits (via domain III) on 2 adjacent RuvB subunits; this complex drives branch migration. In the full resolvosome a probable DNA-RuvA(4)-RuvB(12)-RuvC(2) complex forms which resolves the HJ.

It is found in the cytoplasm. It catalyses the reaction ATP + H2O = ADP + phosphate + H(+). The RuvA-RuvB-RuvC complex processes Holliday junction (HJ) DNA during genetic recombination and DNA repair, while the RuvA-RuvB complex plays an important role in the rescue of blocked DNA replication forks via replication fork reversal (RFR). RuvA specifically binds to HJ cruciform DNA, conferring on it an open structure. The RuvB hexamer acts as an ATP-dependent pump, pulling dsDNA into and through the RuvAB complex. RuvB forms 2 homohexamers on either side of HJ DNA bound by 1 or 2 RuvA tetramers; 4 subunits per hexamer contact DNA at a time. Coordinated motions by a converter formed by DNA-disengaged RuvB subunits stimulates ATP hydrolysis and nucleotide exchange. Immobilization of the converter enables RuvB to convert the ATP-contained energy into a lever motion, pulling 2 nucleotides of DNA out of the RuvA tetramer per ATP hydrolyzed, thus driving DNA branch migration. The RuvB motors rotate together with the DNA substrate, which together with the progressing nucleotide cycle form the mechanistic basis for DNA recombination by continuous HJ branch migration. Branch migration allows RuvC to scan DNA until it finds its consensus sequence, where it cleaves and resolves cruciform DNA. The sequence is that of Holliday junction branch migration complex subunit RuvB from Lachnoclostridium phytofermentans (strain ATCC 700394 / DSM 18823 / ISDg) (Clostridium phytofermentans).